The chain runs to 509 residues: DNA nucleotidylexotransferase (509 aa).

The disordered stretch occupies residues 1-24; the sequence is MDPPRASHLSPRKKRPRQTGALMA. The short motif at 11-17 is the Nuclear localization signal element; sequence PRKKRPR. A BRCT domain is found at 27–124; the sequence is PQDIKFQDLV…KPVEMTGKHQ (98 aa). Serine 134 is modified (phosphoserine). A mediates interaction with DNTTIP2 region spans residues 151 to 509; sequence SQYACQRRTT…DYIEPWERNA (359 aa). Positions 258 to 262 are involved in DNA binding; that stretch reads VGLKT. A 2'-deoxyribonucleoside 5'-triphosphate is bound by residues 333–338 and 342–345; these read GFRRGK and HDVD. Residues aspartate 343, aspartate 345, and aspartate 433 each coordinate Mg(2+). 448–449 contacts a 2'-deoxyribonucleoside 5'-triphosphate; the sequence is GW.

It belongs to the DNA polymerase type-X family. As to quaternary structure, interacts with PRP19 and DNTTIP1. Forms a ternary complex with DNTTIP2 and core histone. Released from this complex by PCNA. Interacts with TRERF1. The cofactor is Mg(2+).

The protein localises to the nucleus. It carries out the reaction DNA(n) + a 2'-deoxyribonucleoside 5'-triphosphate = DNA(n+1) + diphosphate. Functionally, template-independent DNA polymerase which catalyzes the random addition of deoxynucleoside 5'-triphosphate to the 3'-end of a DNA initiator. One of the in vivo functions of this enzyme is the addition of nucleotides at the junction (N region) of rearranged Ig heavy chain and T-cell receptor gene segments during the maturation of B- and T-cells. This Homo sapiens (Human) protein is DNA nucleotidylexotransferase (DNTT).